A 384-amino-acid polypeptide reads, in one-letter code: S-adenosylmethionine synthase (384 aa).

Position 15 (histidine 15) interacts with ATP. Aspartate 17 lines the Mg(2+) pocket. Residue glutamate 43 coordinates K(+). L-methionine contacts are provided by glutamate 56 and glutamine 99. The interval 99 to 109 is flexible loop; it reads QSADINQGVDR. ATP-binding positions include 164-166, 230-231, aspartate 239, 245-246, alanine 262, and lysine 266; these read DAK, RF, and RK. An L-methionine-binding site is contributed by aspartate 239. Lysine 270 is a binding site for L-methionine.

Belongs to the AdoMet synthase family. As to quaternary structure, homotetramer; dimer of dimers. Requires Mg(2+) as cofactor. K(+) is required as a cofactor.

Its subcellular location is the cytoplasm. It catalyses the reaction L-methionine + ATP + H2O = S-adenosyl-L-methionine + phosphate + diphosphate. It participates in amino-acid biosynthesis; S-adenosyl-L-methionine biosynthesis; S-adenosyl-L-methionine from L-methionine: step 1/1. In terms of biological role, catalyzes the formation of S-adenosylmethionine (AdoMet) from methionine and ATP. The overall synthetic reaction is composed of two sequential steps, AdoMet formation and the subsequent tripolyphosphate hydrolysis which occurs prior to release of AdoMet from the enzyme. The polypeptide is S-adenosylmethionine synthase (Haemophilus influenzae (strain ATCC 51907 / DSM 11121 / KW20 / Rd)).